A 27-amino-acid chain; its full sequence is Snake venom serine protease Afaacytin alpha/beta/beta' chains (27 aa).

The region spanning 1–27 is the Peptidase S1 domain; the sequence is VIGGAECNINEHRSLVLLYXSSSXFGE.

It belongs to the peptidase S1 family. Snake venom subfamily. As to quaternary structure, heterodimer of an alpha and a beta chain. Subunit beta is constituted of two disulfide-linked polypeptidic chains, beta and beta'. Calcium appears to be required for structural cohesion of the molecule. In terms of processing, both chains alpha and beta are N-glycosylated. As to expression, expressed by the venom gland.

The protein resides in the secreted. Inhibited by diisopropylfluorophosphate (DFP), benzamidine, heparin and hirudin, but not by plasmatic thrombin inhibitors, antithrombin-III and ecotin. Its function is as follows. Snake venom serine protease that exhibits alpha-fibrinase and beta-fibrinogenase activities. It replaces missing factors VIII (F8) and IX (F9) in deficient plasmas by activating purified human factor X (F10) into factor Xa. It releases serotonin from platelets and induces platelet aggregation in human (but not in rabbit). Has caseinolytic, arginine-esterase and amidase activities. The protein is Snake venom serine protease Afaacytin alpha/beta/beta' chains of Cerastes cerastes (Horned desert viper).